The following is a 1242-amino-acid chain: Structural polyprotein (1242 aa).

The tract at residues 1–36 (MFPYPTLNYPPMAPVNPMAYRDPNPPRRRWRPFRPP) is necessary for nucleocapsid assembly and virus assembly. The interval 1 to 104 (MFPYPTLNYP…KQKPGKRQRM (104 aa)) is disordered. The segment at 37 to 70 (LAAQIEDLRRSIANLTFKQRAPNPPAGPPAKRKK) is host transcription inhibition. Positions 44 to 51 (LRRSIANL) match the Supraphysiological nuclear export signal motif. Residues 66–104 (AKRKKPAPKPKPAAPKKKRQPPPAKKQKRKQKPGKRQRM) are compositionally biased toward basic residues. Residues 67–70 (KRKK) carry the Nuclear localization signal motif. Residues 83–113 (KRQPPPAKKQKRKQKPGKRQRMCMKLESDKT) are binding to the viral RNA. The interval 98–112 (PGKRQRMCMKLESDK) is ribosome-binding. Phosphoserine is present on Ser-110. The Peptidase S3 domain maps to 112-261 (KTFPIMLNGQ…KDTPEGSEPW (150 aa)). Phosphothreonine is present on Thr-113. Residues His-138, Asp-160, and Ser-212 each act as charge relay system in the active site. The interval 262–273 (SLTTVMCVLANI) is functions as an uncleaved signal peptide for the precursor of protein E3/E2. Residue Asn-272 is glycosylated (N-linked (GlcNAc...) asparagine; by host). Residues 325–688 (DLETHFTQYK…YYYNRYPMTT (364 aa)) lie on the Extracellular side of the membrane. The chain crosses the membrane as a helical span at residues 689–709 (VIGLCTCVAIIMVSCVTSVWL). Residues 710–744 (LCRTRNLCITPYRLAPNAQVPILLAVLCCVKPTRA) lie on the Cytoplasmic side of the membrane. S-palmitoyl cysteine; by host attachment occurs at residues Cys-717, Cys-737, and Cys-738. The interval 717-737 (CITPYRLAPNAQVPILLAVLC) is transient transmembrane before p62-6K protein processing. The Extracellular segment spans residues 745-759 (DDTLQVLNYLWNNNQ). 2 consecutive transmembrane segments (helical) span residues 760–780 (NFFW…MRML) and 781–801 (RCLL…GAAA). Over 802 to 1218 (YEHAAVMPNK…WSWLKVLVGS (417 aa)) the chain is Extracellular. 8 disulfide bridges follow: Cys-850–Cys-915, Cys-863–Cys-895, Cys-864–Cys-897, Cys-869–Cys-879, Cys-1061–Cys-1073, Cys-1103–Cys-1178, Cys-1108–Cys-1182, and Cys-1130–Cys-1172. The E1 fusion peptide loop stretch occupies residues 885–902 (VYPFMWGGAYCFCDTENT). The chain crosses the membrane as a helical span at residues 1219 to 1239 (TSAFIVLGLIATAVVALVLFT). At 1240-1242 (HRH) the chain is on the cytoplasmic side.

Part of a tetrameric complex composed of host CRM1, host importin alpha/beta dimer and the viral capsid; this complex blocks the receptor-mediated transport through the nuclear pore. Interacts with host phosphatase PPP1CA; this interaction dephosphorylates the capsid protein, which increases its ability to bind to the viral genome. Interacts with host karyopherin KPNA4; this interaction allows the nuclear import of the viral capsid protein. Interacts with spike glycoprotein E2. Interacts with host IRAK1; the interaction leads to inhibition of IRAK1-dependent signaling. In terms of assembly, the precursor of protein E3/E2 and E1 form a heterodimer shortly after synthesis. As to quaternary structure, the precursor of protein E3/E2 and E1 form a heterodimer shortly after synthesis. Processing of the precursor of protein E3/E2 into E2 and E3 results in a heterodimer of the spike glycoproteins E2 and E1. Spike at virion surface are constituted of three E2-E1 heterodimers. After target cell attachment and endocytosis, E1 change conformation to form homotrimers. Interacts with 6K protein. Processing of the precursor of protein E3/E2 into E2 and E3 results in a heterodimer of the spike glycoproteins E2 and E1. Spike at virion surface are constituted of three E2-E1 heterodimers. Interacts with 6K protein. In terms of assembly, interacts with spike glycoprotein E1. Interacts with spike glycoprotein E2. Structural polyprotein: Specific enzymatic cleavages in vivo yield mature proteins. Capsid protein is auto-cleaved during polyprotein translation, unmasking a signal peptide at the N-terminus of the precursor of E3/E2. The remaining polyprotein is then targeted to the host endoplasmic reticulum, where host signal peptidase cleaves it into pE2, 6K and E1 proteins. pE2 is further processed to mature E3 and E2 by host furin in trans-Golgi vesicle. Post-translationally, phosphorylated on serine and threonine residues. In terms of processing, palmitoylated via thioester bonds. These palmitoylations may induce disruption of the C-terminus transmembrane. This would result in the reorientation of E2 C-terminus from lumenal to cytoplasmic side. N-glycosylated. Post-translationally, palmitoylated via thioester bonds.

Its subcellular location is the virion. The protein resides in the host cytoplasm. The protein localises to the host cell membrane. It localises to the host nucleus. It is found in the virion membrane. It carries out the reaction Autocatalytic release of the core protein from the N-terminus of the togavirus structural polyprotein by hydrolysis of a -Trp-|-Ser- bond.. Functionally, forms an icosahedral capsid with a T=4 symmetry composed of 240 copies of the capsid protein surrounded by a lipid membrane through which penetrate 80 spikes composed of trimers of E1-E2 heterodimers. The capsid protein binds to the viral RNA genome at a site adjacent to a ribosome binding site for viral genome translation following genome release. Possesses a protease activity that results in its autocatalytic cleavage from the nascent structural protein. Following its self-cleavage, the capsid protein transiently associates with ribosomes, and within several minutes the protein binds to viral RNA and rapidly assembles into icosahedric core particles. The resulting nucleocapsid eventually associates with the cytoplasmic domain of the spike glycoprotein E2 at the cell membrane, leading to budding and formation of mature virions. In case of infection, new virions attach to target cells and after clathrin-mediated endocytosis their membrane fuses with the host endosomal membrane. This leads to the release of the nucleocapsid into the cytoplasm, followed by an uncoating event necessary for the genomic RNA to become accessible. The uncoating might be triggered by the interaction of capsid proteins with ribosomes. Binding of ribosomes would release the genomic RNA since the same region is genomic RNA-binding and ribosome-binding. Specifically inhibits interleukin-1 receptor-associated kinase 1/IRAK1-dependent signaling during viral entry, representing a means by which the alphaviruses may evade innate immune detection and activation prior to viral gene expression. Inhibits host transcription. Forms a tetrameric complex with XPO1/CRM1 and the nuclear import receptor importin. This complex blocks the central channel of host nuclear pores thereby inhibiting the receptor-mediated nuclear transport and thus the host mRNA and rRNA transcription. The inhibition of transcription is linked to a cytopathic effect on the host cell. Provides the signal sequence for the translocation of the precursor of protein E3/E2 to the host endoplasmic reticulum. Furin-cleaved E3 remains associated with spike glycoprotein E1 and mediates pH protection of the latter during the transport via the secretory pathway. After virion release from the host cell, the assembly protein E3 is gradually released in the extracellular space. In terms of biological role, plays a role in viral attachment to target host cell, by binding to the cell receptor. Synthesized as a p62 precursor which is processed by furin at the cell membrane just before virion budding, giving rise to E2-E1 heterodimer. The p62-E1 heterodimer is stable, whereas E2-E1 is unstable and dissociate at low pH. p62 is processed at the last step, presumably to avoid E1 fusion activation before its final export to cell surface. E2 C-terminus contains a transitory transmembrane that would be disrupted by palmitoylation, resulting in reorientation of the C-terminal tail from lumenal to cytoplasmic side. This step is critical since E2 C-terminus is involved in budding by interacting with capsid proteins. This release of E2 C-terminus in cytoplasm occurs lately in protein export, and precludes premature assembly of particles at the endoplasmic reticulum membrane. Its function is as follows. Constitutive membrane protein involved in virus glycoprotein processing, cell permeabilization, and the budding of viral particles. Disrupts the calcium homeostasis of the cell, probably at the endoplasmic reticulum level. This leads to cytoplasmic calcium elevation. Because of its lipophilic properties, the 6K protein is postulated to influence the selection of lipids that interact with the transmembrane domains of the glycoproteins, which, in turn, affects the deformability of the bilayer required for the extreme curvature that occurs as budding proceeds. Present in low amount in virions, about 3% compared to viral glycoproteins. Functionally, class II viral fusion protein. Fusion activity is inactive as long as E1 is bound to E2 in mature virion. After virus attachment to target cell and endocytosis, acidification of the endosome would induce dissociation of E1/E2 heterodimer and concomitant trimerization of the E1 subunits. This E1 trimer is fusion active, and promotes release of viral nucleocapsid in cytoplasm after endosome and viral membrane fusion. Efficient fusion requires the presence of cholesterol and sphingolipid in the target membrane. Fusion is optimal at levels of about 1 molecule of cholesterol per 2 molecules of phospholipids, and is specific for sterols containing a 3-beta-hydroxyl group. This chain is Structural polyprotein, found in Aedes (Human).